Consider the following 200-residue polypeptide: Recombination protein RecR (200 aa).

The segment at 57 to 72 adopts a C4-type zinc-finger fold; sequence CQHCRTFTENSLCDIC. In terms of domain architecture, Toprim spans 81–176; sequence GQLCIVETPA…NITRIAHGVP (96 aa).

Belongs to the RecR family.

Its function is as follows. May play a role in DNA repair. It seems to be involved in an RecBC-independent recombinational process of DNA repair. It may act with RecF and RecO. In Tolumonas auensis (strain DSM 9187 / NBRC 110442 / TA 4), this protein is Recombination protein RecR.